The primary structure comprises 874 residues: Cyanophycin synthetase (874 aa).

Residues 224-480 enclose the ATP-grasp domain; that stretch reads KTTLAEAGIP…VAAPVIDMLF (257 aa). Residue 495–501 participates in ATP binding; that stretch reads GTNGKTT.

This sequence in the C-terminal section; belongs to the MurCDEF family. As to quaternary structure, homodimer.

The catalysed reaction is [L-4-(L-arginin-2-N-yl)aspartate](n) + L-aspartate + ATP = [L-4-(L-arginin-2-N-yl)aspartate](n)-L-aspartate + ADP + phosphate + H(+). The enzyme catalyses [L-4-(L-arginin-2-N-yl)aspartate](n)-L-aspartate + L-arginine + ATP = [L-4-(L-arginin-2-N-yl)aspartate](n+1) + ADP + phosphate + H(+). Catalyzes the ATP-dependent polymerization of arginine and aspartate to multi-L-arginyl-poly-L-aspartic acid (cyanophycin; a water-insoluble reserve polymer). This Geminocystis herdmanii (strain PCC 6308) (Synechocystis sp. (strain PCC 6308)) protein is Cyanophycin synthetase (cphA).